Here is a 125-residue protein sequence, read N- to C-terminus: Large ribosomal subunit protein bL19 (125 aa).

This sequence belongs to the bacterial ribosomal protein bL19 family.

In terms of biological role, this protein is located at the 30S-50S ribosomal subunit interface and may play a role in the structure and function of the aminoacyl-tRNA binding site. This Ehrlichia ruminantium (strain Welgevonden) protein is Large ribosomal subunit protein bL19.